The chain runs to 913 residues: DNA mismatch repair protein MutS (913 aa).

Residue 720-727 (GPNASGKS) coordinates ATP.

It belongs to the DNA mismatch repair MutS family.

Its function is as follows. This protein is involved in the repair of mismatches in DNA. It is possible that it carries out the mismatch recognition step. This protein has a weak ATPase activity. This chain is DNA mismatch repair protein MutS, found in Prochlorococcus marinus (strain AS9601).